The primary structure comprises 274 residues: TATA box-binding protein-associated factor RNA polymerase I subunit D (274 aa).

The span at 1 to 19 (MDSLNYTTACDSAVETENQ) shows a compositional bias: polar residues. 2 disordered regions span residues 1 to 45 (MDSL…RQRN) and 84 to 111 (NKKR…RTTR). Position 20 is a phosphoserine (Ser-20). Basic residues predominate over residues 84 to 110 (NKKRKRKKKKYKPTGRSVGRPKGRRTT). Residues Ser-132 and Ser-229 each carry the phosphoserine modification.

In terms of assembly, component of the transcription factor SL1/TIF-IB complex, composed of TBP and at least TAF1A, TAF1B, TAF1C and TAF1D. Interacts with UBTF.

It localises to the nucleus. Functionally, component of the transcription factor SL1/TIF-IB complex, which is involved in the assembly of the PIC (preinitiation complex) during RNA polymerase I-dependent transcription. The rate of PIC formation probably is primarily dependent on the rate of association of SL1/TIF-IB with the rDNA promoter. SL1/TIF-IB is involved in stabilization of nucleolar transcription factor 1/UBTF on rDNA. Formation of SL1/TIF-IB excludes the association of TBP with TFIID subunits. The chain is TATA box-binding protein-associated factor RNA polymerase I subunit D (TAF1D) from Bos taurus (Bovine).